The following is a 428-amino-acid chain: MFVDQVKVYVKGGDGGNGMVAFRREKYVPKGGPAGGDGGNGGDVVFEVDEGLRTLMDFRYQRHFKAIRGEHGMSKNQHGRNADDMVVKVPPGTVVTDDDTKQVIADLTEHGQRAVIAKGGRGGRGNTRFATPANPAPQLSEHGEPGKERYIVLELKVLADVGLVGFPSVGKSTLLSVVSSAKPKIADYHFTTLVPNLGMVETDDGRSFVMADLPGLIEGAHEGVGLGHQFLRHIERTRVIVHVIDMSAMEGRDPYEDYVTINQELSEYNLRLTERPQIIVANKMDMPEAAENLKAFKEKLQDDHPVFPISAVTREGLRDLLFEVANQLETTPEFPLYDEEELAENRVMYTMEDEEIPFNITRDPDGAFVLSGDSLERLFKMTDFSRDESVKRFARQMRGMGVDEALRERGAKDGDIIRLLEFEFEFID.

Residues 1–158 (MFVDQVKVYV…RYIVLELKVL (158 aa)) enclose the Obg domain. Positions 117–143 (AKGGRGGRGNTRFATPANPAPQLSEHG) are disordered. In terms of domain architecture, OBG-type G spans 159-329 (ADVGLVGFPS…LLFEVANQLE (171 aa)). Residues 165–172 (GFPSVGKS), 190–194 (FTTLV), 212–215 (DLPG), 282–285 (NKMD), and 310–312 (SAV) each bind GTP. Mg(2+) contacts are provided by S172 and T192. The OCT domain maps to 350–428 (TMEDEEIPFN…LLEFEFEFID (79 aa)).

The protein belongs to the TRAFAC class OBG-HflX-like GTPase superfamily. OBG GTPase family. As to quaternary structure, monomer. Mg(2+) serves as cofactor.

The protein resides in the cytoplasm. In terms of biological role, an essential GTPase which binds GTP, GDP and possibly (p)ppGpp with moderate affinity, with high nucleotide exchange rates and a fairly low GTP hydrolysis rate. Plays a role in control of the cell cycle, stress response, ribosome biogenesis and in those bacteria that undergo differentiation, in morphogenesis control. This chain is GTPase Obg, found in Bacillus velezensis (strain DSM 23117 / BGSC 10A6 / LMG 26770 / FZB42) (Bacillus amyloliquefaciens subsp. plantarum).